Reading from the N-terminus, the 116-residue chain is Large ribosomal subunit protein bL17 (116 aa).

This sequence belongs to the bacterial ribosomal protein bL17 family. As to quaternary structure, part of the 50S ribosomal subunit. Contacts protein L32.

The sequence is that of Large ribosomal subunit protein bL17 from Helicobacter pylori (strain G27).